We begin with the raw amino-acid sequence, 370 residues long: Chaperone protein DnaJ (370 aa).

The region spanning 6–70 (DYYEVLGVQR…EKRSMYDRFG (65 aa)) is the J domain. The CR-type zinc finger occupies 128 to 208 (GVEKTIEYRR…CRGEGRIRQT (81 aa)). Residues Cys141, Cys144, Cys158, Cys161, Cys182, Cys185, Cys196, and Cys199 each contribute to the Zn(2+) site. CXXCXGXG motif repeat units lie at residues 141–148 (CPACRGSG), 158–165 (CPKCGGLG), 182–189 (CDMCRGEG), and 196–203 (CRECRGEG).

The protein belongs to the DnaJ family. Homodimer. The cofactor is Zn(2+).

The protein localises to the cytoplasm. In terms of biological role, participates actively in the response to hyperosmotic and heat shock by preventing the aggregation of stress-denatured proteins and by disaggregating proteins, also in an autonomous, DnaK-independent fashion. Unfolded proteins bind initially to DnaJ; upon interaction with the DnaJ-bound protein, DnaK hydrolyzes its bound ATP, resulting in the formation of a stable complex. GrpE releases ADP from DnaK; ATP binding to DnaK triggers the release of the substrate protein, thus completing the reaction cycle. Several rounds of ATP-dependent interactions between DnaJ, DnaK and GrpE are required for fully efficient folding. Also involved, together with DnaK and GrpE, in the DNA replication of plasmids through activation of initiation proteins. The protein is Chaperone protein DnaJ of Roseiflexus castenholzii (strain DSM 13941 / HLO8).